A 1424-amino-acid polypeptide reads, in one-letter code: Putative disease resistance protein At3g14460 (1424 aa).

One can recognise an NB-ARC domain in the interval 152-454 (WRQASRSRPD…AIDLLYQPRS (303 aa)). 200-207 (GMPGVGKT) provides a ligand contact to ATP. LRR repeat units lie at residues 498-523 (VSGDFCFRLEDDNIPEIPSTTRHFSF), 552-571 (PTSLESLQLTEKVLNPLLNA), 572-595 (LSGLRILSLSHYQITNLPKSLKGL), 597-618 (LLRYLDLSSTKIKELPEFVCTL), 620-641 (NLQTLLLSNCRDLTSLPKSIAE), 642-665 (LINLRLLDLVGTPLVEMPPGIKKL), and 806-830 (LPSLKYLSIEKFNILQKVGLDFFFG). Disordered stretches follow at residues 911-977 (FRRS…PKDR) and 1050-1070 (IKSSVPSPRSSEAIKPSQYDD). 2 stretches are compositionally biased toward polar residues: residues 912-927 (RRSLTNIPESPASIPS) and 934-972 (SSPTGNPKSDASTSAQPGFASSSQSNDDNEVTSTSSLSS). 5 LRR repeats span residues 1090-1114 (PQNLQSLHIDSCDGLTSLPENLTES), 1118-1139 (LHELLIIACHSLESFPGSHPPT), 1238-1262 (TPKLSSMLLSNCKKLQALPEKLFGL), 1264-1286 (SLLSLFIIKCPEIETIPGGGFPS), and 1310-1336 (LENLRNLEIDGGNEDIESFPEEGLLPK).

This sequence belongs to the disease resistance NB-LRR family.

In terms of biological role, potential disease resistance protein. The sequence is that of Putative disease resistance protein At3g14460 from Arabidopsis thaliana (Mouse-ear cress).